A 310-amino-acid chain; its full sequence is tRNA-cytidine(32) 2-sulfurtransferase (310 aa).

Positions 47–52 (SGGKDS) match the PP-loop motif motif. Positions 122, 125, and 213 each coordinate [4Fe-4S] cluster.

It belongs to the TtcA family. Homodimer. Mg(2+) is required as a cofactor. [4Fe-4S] cluster serves as cofactor.

The protein localises to the cytoplasm. The catalysed reaction is cytidine(32) in tRNA + S-sulfanyl-L-cysteinyl-[cysteine desulfurase] + AH2 + ATP = 2-thiocytidine(32) in tRNA + L-cysteinyl-[cysteine desulfurase] + A + AMP + diphosphate + H(+). The protein operates within tRNA modification. In terms of biological role, catalyzes the ATP-dependent 2-thiolation of cytidine in position 32 of tRNA, to form 2-thiocytidine (s(2)C32). The sulfur atoms are provided by the cysteine/cysteine desulfurase (IscS) system. This is tRNA-cytidine(32) 2-sulfurtransferase from Serratia proteamaculans (strain 568).